Consider the following 269-residue polypeptide: uncharacterized protein (269 aa).

The tract at residues Met-1–Leu-21 is disordered.

This is an uncharacterized protein from Homo sapiens (Human).